Reading from the N-terminus, the 170-residue chain is Adenine phosphoribosyltransferase (170 aa).

The protein belongs to the purine/pyrimidine phosphoribosyltransferase family. Homodimer.

It localises to the cytoplasm. The catalysed reaction is AMP + diphosphate = 5-phospho-alpha-D-ribose 1-diphosphate + adenine. Its pathway is purine metabolism; AMP biosynthesis via salvage pathway; AMP from adenine: step 1/1. Catalyzes a salvage reaction resulting in the formation of AMP, that is energically less costly than de novo synthesis. This chain is Adenine phosphoribosyltransferase, found in Mycoplasma capricolum subsp. capricolum (strain California kid / ATCC 27343 / NCTC 10154).